Reading from the N-terminus, the 592-residue chain is Outer spore wall assembly protein SHE10 (592 aa).

A signal peptide spans 1-23; that stretch reads MRFFKRFLLTLTVFIYTLRYLHC. Coiled coils occupy residues 354-385 and 448-583; these read ENNI…LYEE and LNQF…KQMG. A compositionally biased stretch (basic and acidic residues) spans 507–580; sequence QSEQEERIKS…EVRKQEEARK (74 aa). The interval 507 to 592 is disordered; sequence QSEQEERIKS…GSPPPPQQQQ (86 aa).

It belongs to the SHE10 family. In terms of assembly, component of the mitochondria-localized RNase mitochondrial RNA-processing (RNase MRP) composed of one single RNA encoded by the NME1 gene and at least 31 proteins. Absent in the nucleus-localized RNase MRP (NuMRP).

The protein resides in the mitochondrion. Involved in spore wall assembly. May be a component of the mitochondrial RNase MRP (MtMRP), a ribonucleoprotein endoribonuclease involved in the cleaving RNA transcripts to generate primers for DNA replication in mitochondria. The protein is Outer spore wall assembly protein SHE10 of Vanderwaltozyma polyspora (strain ATCC 22028 / DSM 70294 / BCRC 21397 / CBS 2163 / NBRC 10782 / NRRL Y-8283 / UCD 57-17) (Kluyveromyces polysporus).